A 117-amino-acid polypeptide reads, in one-letter code: Large ribosomal subunit protein uL18 (117 aa).

The protein belongs to the universal ribosomal protein uL18 family. In terms of assembly, part of the 50S ribosomal subunit; part of the 5S rRNA/L5/L18/L25 subcomplex. Contacts the 5S and 23S rRNAs.

In terms of biological role, this is one of the proteins that bind and probably mediate the attachment of the 5S RNA into the large ribosomal subunit, where it forms part of the central protuberance. The chain is Large ribosomal subunit protein uL18 from Pasteurella multocida (strain Pm70).